The chain runs to 663 residues: LEAF RUST 10 DISEASE-RESISTANCE LOCUS RECEPTOR-LIKE PROTEIN KINASE-like 1.4 (663 aa).

The signal sequence occupies residues 1–25 (MYYPLSSSLMFFILFSLFYHLPCES). The Extracellular portion of the chain corresponds to 26-241 (SKCESLFQCG…TSLSIGAKAG (216 aa)). N-linked (GlcNAc...) asparagine glycosylation is found at Asn-36, Asn-64, Asn-106, Asn-137, and Asn-208. The helical transmembrane segment at 242 to 262 (IAVASVSGLAILLLAGLFLCI) threads the bilayer. Residues 263 to 663 (RRRRKTQDAQ…TSSSDTAASL (401 aa)) lie on the Cytoplasmic side of the membrane. Residues 282–304 (SYSSRDTSRNPTSTTISSSSNHS) form a disordered region. The span at 290–304 (RNPTSTTISSSSNHS) shows a compositional bias: low complexity. Residues 334–609 (ENFSRELGDG…DEIVEILRGI (276 aa)) enclose the Protein kinase domain. ATP is bound by residues 340-348 (LGDGGFGTV) and Lys-362. Asp-458 acts as the Proton acceptor in catalysis. The interval 637 to 663 (LLRNSVPPPISPETDKWTSSSDTAASL) is disordered. Positions 653-663 (WTSSSDTAASL) are enriched in polar residues.

The protein belongs to the protein kinase superfamily. Ser/Thr protein kinase family.

The protein resides in the cell membrane. It catalyses the reaction L-seryl-[protein] + ATP = O-phospho-L-seryl-[protein] + ADP + H(+). It carries out the reaction L-threonyl-[protein] + ATP = O-phospho-L-threonyl-[protein] + ADP + H(+). In Arabidopsis thaliana (Mouse-ear cress), this protein is LEAF RUST 10 DISEASE-RESISTANCE LOCUS RECEPTOR-LIKE PROTEIN KINASE-like 1.4.